We begin with the raw amino-acid sequence, 252 residues long: Aspartate/glutamate leucyltransferase (252 aa).

It belongs to the R-transferase family. Bpt subfamily.

The protein resides in the cytoplasm. It carries out the reaction N-terminal L-glutamyl-[protein] + L-leucyl-tRNA(Leu) = N-terminal L-leucyl-L-glutamyl-[protein] + tRNA(Leu) + H(+). The catalysed reaction is N-terminal L-aspartyl-[protein] + L-leucyl-tRNA(Leu) = N-terminal L-leucyl-L-aspartyl-[protein] + tRNA(Leu) + H(+). In terms of biological role, functions in the N-end rule pathway of protein degradation where it conjugates Leu from its aminoacyl-tRNA to the N-termini of proteins containing an N-terminal aspartate or glutamate. The sequence is that of Aspartate/glutamate leucyltransferase from Afipia carboxidovorans (strain ATCC 49405 / DSM 1227 / KCTC 32145 / OM5) (Oligotropha carboxidovorans).